We begin with the raw amino-acid sequence, 373 residues long: Peptide chain release factor subunit 1 (373 aa).

Belongs to the eukaryotic release factor 1 family. In terms of assembly, heterodimer of two subunits, one of which binds GTP.

It is found in the cytoplasm. Directs the termination of nascent peptide synthesis (translation) in response to the termination codons UAA, UAG and UGA. The polypeptide is Peptide chain release factor subunit 1 (prf1) (Aeropyrum pernix (strain ATCC 700893 / DSM 11879 / JCM 9820 / NBRC 100138 / K1)).